Reading from the N-terminus, the 540-residue chain is CTP synthase (540 aa).

An amidoligase domain region spans residues 1–266 (MAVKYIFVTG…LTPIARHLEL (266 aa)). Position 14 (Ser-14) interacts with CTP. Ser-14 is a UTP binding site. Residues 15–20 (SLGKGI) and Asp-72 each bind ATP. Residues Asp-72 and Glu-140 each coordinate Mg(2+). Residues 147 to 149 (DIE), 187 to 192 (KTKPTQ), and Lys-223 contribute to the CTP site. UTP contacts are provided by residues 187–192 (KTKPTQ) and Lys-223. Residues 291-540 (TIGFVGKYLS…VKETLAHKKT (250 aa)) form the Glutamine amidotransferase type-1 domain. Position 351 (Gly-351) interacts with L-glutamine. Cys-378 (nucleophile; for glutamine hydrolysis) is an active-site residue. L-glutamine-binding positions include 379 to 382 (LGMQ), Glu-402, and Arg-470. Active-site residues include His-513 and Glu-515.

It belongs to the CTP synthase family. Homotetramer.

The catalysed reaction is UTP + L-glutamine + ATP + H2O = CTP + L-glutamate + ADP + phosphate + 2 H(+). It carries out the reaction L-glutamine + H2O = L-glutamate + NH4(+). It catalyses the reaction UTP + NH4(+) + ATP = CTP + ADP + phosphate + 2 H(+). It participates in pyrimidine metabolism; CTP biosynthesis via de novo pathway; CTP from UDP: step 2/2. With respect to regulation, allosterically activated by GTP, when glutamine is the substrate; GTP has no effect on the reaction when ammonia is the substrate. The allosteric effector GTP functions by stabilizing the protein conformation that binds the tetrahedral intermediate(s) formed during glutamine hydrolysis. Inhibited by the product CTP, via allosteric rather than competitive inhibition. Functionally, catalyzes the ATP-dependent amination of UTP to CTP with either L-glutamine or ammonia as the source of nitrogen. Regulates intracellular CTP levels through interactions with the four ribonucleotide triphosphates. This chain is CTP synthase, found in Helicobacter hepaticus (strain ATCC 51449 / 3B1).